Here is a 213-residue protein sequence, read N- to C-terminus: Uridine kinase (213 aa).

Residue 13–20 (GASASGKS) coordinates ATP.

It belongs to the uridine kinase family.

The protein resides in the cytoplasm. The catalysed reaction is uridine + ATP = UMP + ADP + H(+). It catalyses the reaction cytidine + ATP = CMP + ADP + H(+). It functions in the pathway pyrimidine metabolism; CTP biosynthesis via salvage pathway; CTP from cytidine: step 1/3. The protein operates within pyrimidine metabolism; UMP biosynthesis via salvage pathway; UMP from uridine: step 1/1. In Haemophilus influenzae (strain PittGG), this protein is Uridine kinase.